Consider the following 652-residue polypeptide: Putative ankyrin repeat protein R734 (652 aa).

ANK repeat units lie at residues 77–105 (TNDI…ANNS), 106–136 (EGIK…LPTE), 138–167 (TLRD…HLGY), 192–219 (NDLK…SGYE), 220–242 (FDNR…FFMD), 243–274 (IGFD…QFTQ), 307–337 (INDN…NINR), 396–430 (SDNN…DPNY), 468–498 (PKLT…TIYS), and 535–564 (TNKS…DNNL).

The chain is Putative ankyrin repeat protein R734 from Acanthamoeba polyphaga mimivirus (APMV).